The sequence spans 396 residues: MTSQNPIFIPGPTNIPEEMRKAVDMPTIDHRSPVFGRMLHPALEGVKKVLKTTQAQVFLFPSTGTGGWETAITNTLSPGDKVLAARNGMFSHRWIDMCQRHGLDVTFVETPWGEGVPADRFEEILTADKGHEIRVVLATHNETATGVKSDIAAVRRALDAAKHPALLFVDGVSSIGSMDFRMDEWGVDIAVTGSQKGFMLPPGLAIVGFSPKAMEAVETARLPRTFFDIRDMATGYARNGYPYTPPVGLINGLNASCERILAEGLENVFARHHRIASGVRAAVDAWGLKLCAVRPELYSDSVSAIRVPEGFDANLIVSHALETYDMAFGTGLGQVAGKVFRIGHLGSLTDAMALSGIATAEMVMADLGLPIQLGSGVAAAQEHYRQTTAAAQKKAA.

K196 carries the post-translational modification N6-(pyridoxal phosphate)lysine.

The protein belongs to the class-V pyridoxal-phosphate-dependent aminotransferase family. It depends on pyridoxal 5'-phosphate as a cofactor.

The catalysed reaction is oxaloacetate + glycine = glyoxylate + L-aspartate. Functionally, catalyzes the transamination of glyoxylate into glycine using L-aspartate as the preferred amino group donor. Is essential for the growth of P.denitrificans in the presence of glycolate and glyoxylate since it functions in glyoxylate assimilation via the beta-hydroxyaspartate cycle (BHAC). Can catalyze the reverse reaction in vitro, and also use L-serine and L-glutamate as amino group donor, but with much less efficiency than L-aspartate. This chain is L-aspartate--glyoxylate aminotransferase, found in Paracoccus denitrificans (strain Pd 1222).